We begin with the raw amino-acid sequence, 210 residues long: MKKEIASHLLEIGAVFLQPNDPFTWSSGIKSPIYCDNRLTLSYPKVRQAIAAGLEELIKEHFSTVEVIAGTATAGIAHAAWVSDRMDLPMCYVRSKAKGHGKGNQIEGKAEKGQKVVVVEDLISTGGSAITCVEALREAGCEVLGIVSIFTYELESGKEKLEAANVASYSLSDYSALTEVAAEKGMIGQAETKKLQEWRKNPANEAWITA.

5-phospho-alpha-D-ribose 1-diphosphate-binding positions include R94, K98, H100, and 120–128; that span reads EDLISTGGS. S124 provides a ligand contact to orotate.

This sequence belongs to the purine/pyrimidine phosphoribosyltransferase family. PyrE subfamily. As to quaternary structure, homodimer. It depends on Mg(2+) as a cofactor.

It catalyses the reaction orotidine 5'-phosphate + diphosphate = orotate + 5-phospho-alpha-D-ribose 1-diphosphate. It functions in the pathway pyrimidine metabolism; UMP biosynthesis via de novo pathway; UMP from orotate: step 1/2. In terms of biological role, catalyzes the transfer of a ribosyl phosphate group from 5-phosphoribose 1-diphosphate to orotate, leading to the formation of orotidine monophosphate (OMP). The sequence is that of Orotate phosphoribosyltransferase from Bacillus mycoides (strain KBAB4) (Bacillus weihenstephanensis).